The chain runs to 282 residues: 2-dehydro-3-deoxyphosphooctonate aldolase (282 aa).

It belongs to the KdsA family.

The protein localises to the cytoplasm. It catalyses the reaction D-arabinose 5-phosphate + phosphoenolpyruvate + H2O = 3-deoxy-alpha-D-manno-2-octulosonate-8-phosphate + phosphate. It functions in the pathway carbohydrate biosynthesis; 3-deoxy-D-manno-octulosonate biosynthesis; 3-deoxy-D-manno-octulosonate from D-ribulose 5-phosphate: step 2/3. The protein operates within bacterial outer membrane biogenesis; lipopolysaccharide biosynthesis. The sequence is that of 2-dehydro-3-deoxyphosphooctonate aldolase from Shewanella baltica (strain OS185).